Consider the following 600-residue polypeptide: Adenine deaminase 4 (600 aa).

Belongs to the metallo-dependent hydrolases superfamily. Adenine deaminase family. Mn(2+) is required as a cofactor.

The enzyme catalyses adenine + H2O + H(+) = hypoxanthine + NH4(+). This chain is Adenine deaminase 4, found in Rhizobium meliloti (strain 1021) (Ensifer meliloti).